Reading from the N-terminus, the 461-residue chain is Bifunctional protein GlmU (461 aa).

A pyrophosphorylase region spans residues 1–243; the sequence is MNATVPSAAP…EDELRGINSR (243 aa). UDP-N-acetyl-alpha-D-glucosamine is bound by residues 24-27, lysine 38, glutamine 86, 91-92, 112-114, glycine 155, glutamate 169, asparagine 184, and asparagine 241; these read LAAG, GT, and YGD. Residue aspartate 114 coordinates Mg(2+). Asparagine 241 serves as a coordination point for Mg(2+). Residues 244–264 form a linker region; it reads AELAEAEACVQRRLRAAALDG. The N-acetyltransferase stretch occupies residues 265 to 461; sequence GATLVAPETV…AALRRKKEQG (197 aa). Arginine 330 and lysine 348 together coordinate UDP-N-acetyl-alpha-D-glucosamine. Histidine 360 serves as the catalytic Proton acceptor. Tyrosine 363 and asparagine 374 together coordinate UDP-N-acetyl-alpha-D-glucosamine. Acetyl-CoA contacts are provided by residues alanine 377, 383–384, serine 402, alanine 420, and arginine 437; that span reads NY.

It in the N-terminal section; belongs to the N-acetylglucosamine-1-phosphate uridyltransferase family. The protein in the C-terminal section; belongs to the transferase hexapeptide repeat family. As to quaternary structure, homotrimer. Requires Mg(2+) as cofactor.

The protein localises to the cytoplasm. It catalyses the reaction alpha-D-glucosamine 1-phosphate + acetyl-CoA = N-acetyl-alpha-D-glucosamine 1-phosphate + CoA + H(+). The enzyme catalyses N-acetyl-alpha-D-glucosamine 1-phosphate + UTP + H(+) = UDP-N-acetyl-alpha-D-glucosamine + diphosphate. Its pathway is nucleotide-sugar biosynthesis; UDP-N-acetyl-alpha-D-glucosamine biosynthesis; N-acetyl-alpha-D-glucosamine 1-phosphate from alpha-D-glucosamine 6-phosphate (route II): step 2/2. It functions in the pathway nucleotide-sugar biosynthesis; UDP-N-acetyl-alpha-D-glucosamine biosynthesis; UDP-N-acetyl-alpha-D-glucosamine from N-acetyl-alpha-D-glucosamine 1-phosphate: step 1/1. The protein operates within bacterial outer membrane biogenesis; LPS lipid A biosynthesis. Functionally, catalyzes the last two sequential reactions in the de novo biosynthetic pathway for UDP-N-acetylglucosamine (UDP-GlcNAc). The C-terminal domain catalyzes the transfer of acetyl group from acetyl coenzyme A to glucosamine-1-phosphate (GlcN-1-P) to produce N-acetylglucosamine-1-phosphate (GlcNAc-1-P), which is converted into UDP-GlcNAc by the transfer of uridine 5-monophosphate (from uridine 5-triphosphate), a reaction catalyzed by the N-terminal domain. The protein is Bifunctional protein GlmU of Gluconacetobacter diazotrophicus (strain ATCC 49037 / DSM 5601 / CCUG 37298 / CIP 103539 / LMG 7603 / PAl5).